Here is a 523-residue protein sequence, read N- to C-terminus: Dynein regulatory complex subunit 3 (523 aa).

LRR repeat units lie at residues 44–65, 66–87, 88–109, 110–131, and 132–153; these read DVLSLQLDFRNILRIDNLWQFE, NLRKLQLDNNIIEKIEGLENLA, HLVWLDLSFNNIETIEGLDTLV, NLEDLSLFNNRISKIDSLDALV, and KLQVLSLGNNRIDNMMNIIYLR. An LRRCT domain is found at 166–204; it reads NPISEAEDYKMFICAYLPDLMYLDYRRIDDHTKKLAEAK. Coiled-coil stretches lie at residues 208-242 and 366-391; these read SIDELKHQENLMQAQLEDEQAQREELEKHKTAFVE and MTLEMQLVEQLEETINMFERNIVDMV.

This sequence belongs to the DRC3 family. In terms of assembly, component of the nexin-dynein regulatory complex (N-DRC). Interacts with DRC1. Interacts with TCTE1/DRC5. Interacts with DRC7.

Its subcellular location is the cytoplasm. It localises to the cytoskeleton. The protein resides in the cilium axoneme. It is found in the cell projection. The protein localises to the cilium. Its subcellular location is the flagellum axoneme. It localises to the flagellum. Functionally, component of the nexin-dynein regulatory complex (N-DRC) a key regulator of ciliary/flagellar motility which maintains the alignment and integrity of the distal axoneme and regulates microtubule sliding in motile axonemes. This chain is Dynein regulatory complex subunit 3 (DRC3), found in Homo sapiens (Human).